The primary structure comprises 383 residues: Lipid-A-disaccharide synthase (383 aa).

Belongs to the LpxB family.

The catalysed reaction is 2-N,3-O-bis[(3R)-3-hydroxytetradecanoyl]-alpha-D-glucosaminyl 1-phosphate + UDP-2-N,3-O-bis[(3R)-3-hydroxytetradecanoyl]-alpha-D-glucosamine = lipid A disaccharide (E. coli) + UDP + H(+). It catalyses the reaction a lipid X + a UDP-2-N,3-O-bis[(3R)-3-hydroxyacyl]-alpha-D-glucosamine = a lipid A disaccharide + UDP + H(+). It functions in the pathway glycolipid biosynthesis; lipid IV(A) biosynthesis; lipid IV(A) from (3R)-3-hydroxytetradecanoyl-[acyl-carrier-protein] and UDP-N-acetyl-alpha-D-glucosamine: step 5/6. In terms of biological role, condensation of UDP-2,3-diacylglucosamine and 2,3-diacylglucosamine-1-phosphate to form lipid A disaccharide, a precursor of lipid A, a phosphorylated glycolipid that anchors the lipopolysaccharide to the outer membrane of the cell. The protein is Lipid-A-disaccharide synthase of Klebsiella pneumoniae subsp. pneumoniae (strain ATCC 700721 / MGH 78578).